The primary structure comprises 106 residues: ATP-dependent Clp protease adapter protein ClpS (106 aa).

It belongs to the ClpS family. Binds to the N-terminal domain of the chaperone ClpA.

Involved in the modulation of the specificity of the ClpAP-mediated ATP-dependent protein degradation. This chain is ATP-dependent Clp protease adapter protein ClpS, found in Yersinia enterocolitica serotype O:8 / biotype 1B (strain NCTC 13174 / 8081).